A 1134-amino-acid polypeptide reads, in one-letter code: Spermatogenesis-associated protein 31C2 (1134 aa).

The helical transmembrane segment at 23-43 (PWVLDIFLTLVFALGFFFLLL) threads the bilayer. Disordered regions lie at residues 54–87 (PPSP…NHSL), 115–243 (LEKG…LLTP), 477–504 (PGTS…EAQT), 524–561 (TPQN…DSGS), 727–807 (MPER…PTVP), 928–1007 (NMGH…PSIS), and 1111–1134 (AASS…IRDQ). The span at 59–87 (PKKRKRHLVSQRPAGRRGRPRGRMKNHSL) shows a compositional bias: basic residues. Basic and acidic residues predominate over residues 132–148 (VGKRTPDGASRSSHEPT). Residues 185 to 201 (SSLSASQPPEPSLLLEH) are compositionally biased toward low complexity. The span at 204–235 (PEPPALFPHPPRTPDPLACSPPPPKGFTPPPL) shows a compositional bias: pro residues. A compositionally biased stretch (polar residues) spans 489-504 (WQSSTSTGESSKEAQT). Composition is skewed to polar residues over residues 773-794 (LTYS…SSRA) and 937-948 (PNCQGSCKSQSP). Basic and acidic residues predominate over residues 954-970 (HKRENSRKPNLEKHEEM). A compositionally biased stretch (polar residues) spans 1111–1124 (AASSQQATLKNQSR). Basic and acidic residues predominate over residues 1125-1134 (PNRDRQIRDQ).

Belongs to the SPATA31 family.

The protein resides in the membrane. Its function is as follows. May play a role in spermatogenesis. The chain is Spermatogenesis-associated protein 31C2 (SPATA31C2) from Homo sapiens (Human).